An 880-amino-acid polypeptide reads, in one-letter code: Alanine--tRNA ligase (880 aa).

Residues His568, His572, Cys670, and His674 each coordinate Zn(2+).

This sequence belongs to the class-II aminoacyl-tRNA synthetase family. Requires Zn(2+) as cofactor.

The protein resides in the cytoplasm. It carries out the reaction tRNA(Ala) + L-alanine + ATP = L-alanyl-tRNA(Ala) + AMP + diphosphate. Its function is as follows. Catalyzes the attachment of alanine to tRNA(Ala) in a two-step reaction: alanine is first activated by ATP to form Ala-AMP and then transferred to the acceptor end of tRNA(Ala). Also edits incorrectly charged Ser-tRNA(Ala) and Gly-tRNA(Ala) via its editing domain. This is Alanine--tRNA ligase from Exiguobacterium sibiricum (strain DSM 17290 / CCUG 55495 / CIP 109462 / JCM 13490 / 255-15).